Consider the following 258-residue polypeptide: uncharacterized protein (258 aa).

3 helical membrane passes run 38–58, 72–92, and 111–131; these read VFGLLIALICFSNVLCFLFIA, ALIFTLFIPFVTSLLANIIFI, and FLVICAFSSLPIVNIWLMLWW.

It is found in the cell membrane. This is an uncharacterized protein from Mycoplasma pneumoniae (strain ATCC 29342 / M129 / Subtype 1) (Mycoplasmoides pneumoniae).